Here is a 307-residue protein sequence, read N- to C-terminus: MASEGAKRQPETQNGAAVGLAQVAESLECPGTEECLVPAHETCRSPGEDKCPVGHSLEPELQEEGIKVGEEGLNAGVEAGEERGPKPTSSIVRPAHGPKRKSEVELPPGVLQKKEEPEGSHSESSLSSKQHKKAKKRKSGGAPVPPAVASASAPAAETLGLEPFALPWVLAGKAQRLRPLYQYINYCNPELNQEEDGDREPEVEPEAELALVPEEPGVEQLQLQTLLPVAGELGLGLALPCPNPLVPLTHNLPPLVEEVGEEPGGLSSLRVSGSLKAEVDKTTQVDIDKMLSVCAAPLVPPLSPQYK.

Basic and acidic residues-rich tracts occupy residues 42–52 (TCRSPGEDKCP) and 112–121 (QKKEEPEGSH). The interval 42–153 (TCRSPGEDKC…VPPAVASASA (112 aa)) is disordered. The span at 129-139 (KQHKKAKKRKS) shows a compositional bias: basic residues.

This is an uncharacterized protein from Mus musculus (Mouse).